Consider the following 270-residue polypeptide: tRNA pseudouridine synthase A (270 aa).

Residue Asp52 is the Nucleophile of the active site. Tyr110 serves as a coordination point for substrate. Residues 251 to 270 (TGAADEPAAPHGVTETRMQL) are disordered.

Belongs to the tRNA pseudouridine synthase TruA family. As to quaternary structure, homodimer.

The catalysed reaction is uridine(38/39/40) in tRNA = pseudouridine(38/39/40) in tRNA. Formation of pseudouridine at positions 38, 39 and 40 in the anticodon stem and loop of transfer RNAs. The protein is tRNA pseudouridine synthase A of Roseiflexus sp. (strain RS-1).